Consider the following 38-residue polypeptide: Large ribosomal subunit protein bL36 (38 aa).

It belongs to the bacterial ribosomal protein bL36 family.

This Lactobacillus johnsonii (strain CNCM I-12250 / La1 / NCC 533) protein is Large ribosomal subunit protein bL36.